The chain runs to 73 residues: Beta-defensin 50 (73 aa).

Residues 1–23 (MKTLCFLLLTSGLLYLMVKGVGS) form the signal peptide. Cystine bridges form between C34–C63 and C46–C64.

This sequence belongs to the beta-defensin family. As to expression, highly expressed in prostate. Not expressed in uterus, epididymis, ovary, testis, spleen, submaxillary gland, thymus, thyroid, pancreas, smooth muscle, skeletal muscle, heart, kidney, lung, liver, eye and brain.

It localises to the secreted. Functionally, has bactericidal activity. The protein is Beta-defensin 50 (Defb50) of Mus musculus (Mouse).